Consider the following 3416-residue polypeptide: Genome polyprotein (3416 aa).

Residues 1–34 are disordered; sequence MAKGAVLKGKGGGPPRRVPKETAKKTRQGPGRLP. The Cytoplasmic portion of the chain corresponds to 1–99; the sequence is MAKGAVLKGK…NKRRGKRRST (99 aa). The propeptide at 97-117 is ER anchor for the capsid protein C, removed in mature form by serine protease NS3; it reads RSTTGLLTPILLACLATLVFS. Residues 100-120 traverse the membrane as a helical segment; the sequence is TGLLTPILLACLATLVFSATV. Over 121–243 the chain is Extracellular; the sequence is RRERTGNMVI…HLTRVEGWVW (123 aa). The N-linked (GlcNAc...) asparagine; by host glycan is linked to Asn-145. Residues 244 to 261 form a helical membrane-spanning segment; sequence KNKFLTAAFCAVVWMVTD. Ser-262 is a topological domain (cytoplasmic). Residues 263–281 traverse the membrane as a helical segment; the sequence is LPTRFIVITVALCLAPTYA. The Extracellular segment spans residues 282-728; sequence TRCTHLQNRD…HTAFGAAFNT (447 aa). Intrachain disulfides connect Cys-284/Cys-311, Cys-341/Cys-397, Cys-341/Cys-402, Cys-355/Cys-386, Cys-373/Cys-397, and Cys-373/Cys-402. Residues 379 to 392 are fusion peptide; that stretch reads DRGWGNHCGLFGKG. A glycan (N-linked (GlcNAc...) asparagine; by host) is linked at Asn-435. Disulfide bonds link Cys-467–Cys-571 and Cys-588–Cys-619. The helical transmembrane segment at 729 to 749 threads the bilayer; that stretch reads IFGGVGFLPRILLGVALAWLG. The Cytoplasmic segment spans residues 750–756; the sequence is LNSRNPT. The helical transmembrane segment at 757–777 threads the bilayer; it reads LSVGFLITGGLVLTMTLGVGA. Topologically, residues 778–1134 are extracellular; sequence DMGCAIDANR…RSMVLADNGA (357 aa). 6 cysteine pairs are disulfide-bonded: Cys-781-Cys-792, Cys-832-Cys-922, Cys-957-Cys-1002, Cys-1059-Cys-1108, Cys-1070-Cys-1092, and Cys-1091-Cys-1095. N-linked (GlcNAc...) asparagine; by host glycans are attached at residues Asn-862, Asn-985, and Asn-1001. Residues 1135–1155 form a helical membrane-spanning segment; that stretch reads MLSEGGVPGIVAVFVVLELVI. Topologically, residues 1156 to 1164 are lumenal; the sequence is RRRPTTGSS. Residues 1165-1185 traverse the membrane as a helical segment; that stretch reads VVWCGMVVLGLVVTGLVTIEG. Over 1186–1189 the chain is Cytoplasmic; the sequence is LCRY. A helical membrane pass occupies residues 1190-1210; sequence VVAVGILMSMELGPEIVALVL. The Lumenal portion of the chain corresponds to 1211 to 1235; sequence LQAVFDMRTGLLVAFAVKRAYTTRE. A helical transmembrane segment spans residues 1236-1256; the sequence is AVATYFLLLVLELGFPEASLS. The Cytoplasmic portion of the chain corresponds to 1257-1295; that stretch reads NIWKWADSLAMGALILQACGQEGRTRVGYLLAAMMTQKD. Residues 1296–1316 traverse the membrane as a helical segment; that stretch reads MVIIHTGLTIFLSAATAMAVW. The Lumenal segment spans residues 1317–1361; sequence SMIKGQRDQKGLSWATPLAGLLGGEGVGLRLLAFRKLAERRNRRS. Residues 1362 to 1379 traverse the membrane as a helical segment; sequence FSEPLTVVGVMLTVASGM. Over 1380 to 1384 the chain is Cytoplasmic; the sequence is VRHTS. A helical membrane pass occupies residues 1385 to 1405; that stretch reads QEALCALVAGAFLLLMMVLGT. Over 1406–1456 the chain is Lumenal; it reads RKMQLTAEWCGEVEWNPDLVNEGGEVNLKVRQDAMGNLHLTEVEKEERAMA. The interval 1412–1451 is interacts with and activates NS3 protease; it reads AEWCGEVEWNPDLVNEGGEVNLKVRQDAMGNLHLTEVEKE. Residues 1457 to 1477 constitute an intramembrane region (helical); sequence LWLLAGLVASAFHWAGILIVL. Residues 1478–2162 are Lumenal-facing; that stretch reads AVWTLFEMLG…RMAERDAPEA (685 aa). A Peptidase S7 domain is found at 1492–1671; sequence SELVFSGQET…EAEKSRPEIP (180 aa). Active-site charge relay system; for serine protease NS3 activity residues include His-1545, Asp-1569, and Ser-1629. The Helicase ATP-binding domain occupies 1677–1833; sequence TGWMSKGQIT…ESNGAIMSEE (157 aa). 1690–1697 serves as a coordination point for ATP; it reads MHPGSGKT. A DEAH box motif is present at residues 1781 to 1784; that stretch reads DEAH. Residues 1844–2002 form the Helicase C-terminal domain; it reads GFDWITEYEG…TLRGPVATFY (159 aa). Lys-1885 is modified (N6-acetyllysine; by host). The helical transmembrane segment at 2163-2183 threads the bilayer; it reads FLTIVEVAVLGVATLGILWCF. Residues 2184–2191 lie on the Cytoplasmic side of the membrane; that stretch reads VARASVSR. An intramembrane region (helical) is located at residues 2192 to 2211; that stretch reads MFLGTVVLFAALFLLWIGGV. A topological domain (lumenal) is located at residue Asp-2212. Residues 2213 to 2233 form a helical membrane-spanning segment; the sequence is YGHMAGIALIFYTLLTVLQPE. Residues 2234 to 2246 lie on the Cytoplasmic side of the membrane; that stretch reads PGKQRSSDDNRLA. A helical membrane pass occupies residues 2247–2267; the sequence is YFLLGLFSLAGLVTANEMGML. At 2268–2301 the chain is on the lumenal side; it reads DKTKADLAGLVWRGEQRHPAWEEWTNVDIQPARS. An intramembrane region (helical) is located at residues 2302-2322; that stretch reads WGTYVLIVSLFTPYMLHQLQT. Topologically, residues 2323 to 2345 are lumenal; sequence KIQQLVNSSVASGAQAMRDLGGG. Positions 2346-2366 form an intramembrane region, helical; sequence TPFFGVAGHVIALGVTSLVGA. At 2367–2368 the chain is on the lumenal side; the sequence is TP. The helical transmembrane segment at 2369–2389 threads the bilayer; that stretch reads MSLGLGVALAAFHLAIVASGL. Topologically, residues 2390-2432 are cytoplasmic; the sequence is EAELTQRAHRVFFSAMVKNPMVDGDVINPFPDGETKPALYERR. The helical transmembrane segment at 2433-2453 threads the bilayer; that stretch reads MSLILAIALCMGSVVLNRTAA. The Lumenal portion of the chain corresponds to 2454–2476; sequence SMTEAGAVGLAALGQLVHPETET. The chain crosses the membrane as a helical span at residues 2477-2497; that stretch reads LWTMPMACGMAGLVRGSFWGL. Topologically, residues 2498-3416 are cytoplasmic; the sequence is LPMGHRLWLR…WDLKLESNII (919 aa). Residues 2514 to 2778 enclose the mRNA cap 0-1 NS5-type MT domain; the sequence is GGAEGETLGD…EVDLGTGTRC (265 aa). Ser-2569 serves as a coordination point for S-adenosyl-L-methionine. Ser-2569 is modified (phosphoserine). Residue Lys-2574 is the For 2'-O-MTase activity of the active site. S-adenosyl-L-methionine contacts are provided by Gly-2599, Trp-2600, Thr-2617, Ile-2618, Asp-2644, and Val-2645. The For 2'-O-MTase activity role is filled by Asp-2659. Ile-2660 contacts S-adenosyl-L-methionine. Catalysis depends on for 2'-O-MTase activity residues Lys-2696 and Glu-2732. Positions 2732-2736 are interaction with host SCRIB; sequence EMYFS. Tyr-2734 is a binding site for S-adenosyl-L-methionine. Zn(2+) is bound by residues Glu-2952, His-2956, Cys-2961, and Cys-2964. The region spanning 3042-3191 is the RdRp catalytic domain; the sequence is GLFYADDTAG…RPIDDRFGKA (150 aa). The Zn(2+) site is built by His-3226, Cys-3242, and Cys-3361.

The protein in the N-terminal section; belongs to the class I-like SAM-binding methyltransferase superfamily. mRNA cap 0-1 NS5-type methyltransferase family. In terms of assembly, homodimer. Interacts (via N-terminus) with host EXOC1 (via C-terminus); this interaction results in EXOC1 degradation through the proteasome degradation pathway. Forms heterodimers with envelope protein E in the endoplasmic reticulum and Golgi. As to quaternary structure, homodimer; in the endoplasmic reticulum and Golgi. Interacts with protein prM. Interacts with non-structural protein 1. In terms of assembly, homodimer; Homohexamer when secreted. Interacts with envelope protein E. NS1 interacts with NS4B. Interacts with host complement protein CFH; this interaction leads to the degradation of C3. Interacts (via N-terminus) with serine protease NS3. As to quaternary structure, forms a heterodimer with serine protease NS3. May form homooligomers. In terms of assembly, forms a heterodimer with NS2B. Interacts with non-structural protein 2A (via N-terminus). Interacts with NS4B. Interacts with unphosphorylated RNA-directed RNA polymerase NS5; this interaction stimulates RNA-directed RNA polymerase NS5 guanylyltransferase activity. Interacts with serine protease NS3. As to quaternary structure, homodimer. Interacts with host STAT2; this interaction inhibits the phosphorylation of the latter, and, when all viral proteins are present (polyprotein), targets STAT2 for degradation. Interacts with serine protease NS3. Specific enzymatic cleavages in vivo yield mature proteins. Cleavages in the lumen of endoplasmic reticulum are performed by host signal peptidase, whereas cleavages in the cytoplasmic side are performed by serine protease NS3. Signal cleavage at the 2K-4B site requires a prior NS3 protease-mediated cleavage at the 4A-2K site. Post-translationally, cleaved in post-Golgi vesicles by a host furin, releasing the mature small envelope protein M, and peptide pr. This cleavage is incomplete as up to 30% of viral particles still carry uncleaved prM. In terms of processing, N-glycosylated. N-glycosylated. The excreted form is glycosylated and this is required for efficient secretion of the protein from infected cells. Post-translationally, acetylated by host KAT5. Acetylation modulates NS3 RNA-binding and unwinding activities and plays an important positive role for viral replication. In terms of processing, phosphorylated on serines residues. This phosphorylation may trigger NS5 nuclear localization.

The protein localises to the virion. Its subcellular location is the host nucleus. It is found in the host cytoplasm. It localises to the host perinuclear region. The protein resides in the secreted. The protein localises to the virion membrane. Its subcellular location is the host endoplasmic reticulum membrane. The catalysed reaction is Selective hydrolysis of -Xaa-Xaa-|-Yaa- bonds in which each of the Xaa can be either Arg or Lys and Yaa can be either Ser or Ala.. It carries out the reaction RNA(n) + a ribonucleoside 5'-triphosphate = RNA(n+1) + diphosphate. It catalyses the reaction a ribonucleoside 5'-triphosphate + H2O = a ribonucleoside 5'-diphosphate + phosphate + H(+). The enzyme catalyses ATP + H2O = ADP + phosphate + H(+). The catalysed reaction is a 5'-end (5'-triphosphoguanosine)-ribonucleoside in mRNA + S-adenosyl-L-methionine = a 5'-end (N(7)-methyl 5'-triphosphoguanosine)-ribonucleoside in mRNA + S-adenosyl-L-homocysteine. It carries out the reaction a 5'-end (N(7)-methyl 5'-triphosphoguanosine)-ribonucleoside in mRNA + S-adenosyl-L-methionine = a 5'-end (N(7)-methyl 5'-triphosphoguanosine)-(2'-O-methyl-ribonucleoside) in mRNA + S-adenosyl-L-homocysteine + H(+). Plays a role in virus budding by binding to the cell membrane and gathering the viral RNA into a nucleocapsid that forms the core of a mature virus particle. During virus entry, may induce genome penetration into the host cytoplasm after hemifusion induced by the surface proteins. Can migrate to the cell nucleus where it modulates host functions. Its function is as follows. Inhibits RNA silencing by interfering with host Dicer. Functionally, prevents premature fusion activity of envelope proteins in trans-Golgi by binding to envelope protein E at pH6.0. After virion release in extracellular space, gets dissociated from E dimers. In terms of biological role, acts as a chaperone for envelope protein E during intracellular virion assembly by masking and inactivating envelope protein E fusion peptide. prM is the only viral peptide matured by host furin in the trans-Golgi network probably to avoid catastrophic activation of the viral fusion activity in acidic Golgi compartment prior to virion release. prM-E cleavage is inefficient, and many virions are only partially matured. These uncleaved prM would play a role in immune evasion. May play a role in virus budding. Exerts cytotoxic effects by activating a mitochondrial apoptotic pathway through M ectodomain. May display a viroporin activity. Its function is as follows. Binds to host cell surface receptor and mediates fusion between viral and cellular membranes. Envelope protein is synthesized in the endoplasmic reticulum in the form of heterodimer with protein prM. They play a role in virion budding in the ER, and the newly formed immature particle is covered with 60 spikes composed of heterodimer between precursor prM and envelope protein E. The virion is transported to the Golgi apparatus where the low pH causes dissociation of PrM-E heterodimers and formation of E homodimers. prM-E cleavage is inefficient, and many virions are only partially matured. These uncleaved prM would play a role in immune evasion. Functionally, involved in immune evasion, pathogenesis and viral replication. Once cleaved off the polyprotein, is targeted to three destinations: the viral replication cycle, the plasma membrane and the extracellular compartment. Essential for viral replication. Required for formation of the replication complex and recruitment of other non-structural proteins to the ER-derived membrane structures. Excreted as a hexameric lipoparticle that plays a role against host immune response. Antagonizing the complement function. Binds to the host macrophages and dendritic cells. Inhibits signal transduction originating from Toll-like receptor 3 (TLR3). In terms of biological role, component of the viral RNA replication complex that functions in virion assembly and antagonizes the host immune response. Required cofactor for the serine protease function of NS3. May have membrane-destabilizing activity and form viroporins. Its function is as follows. Displays three enzymatic activities: serine protease, NTPase and RNA helicase. NS3 serine protease, in association with NS2B, performs its autocleavage and cleaves the polyprotein at dibasic sites in the cytoplasm: C-prM, NS2A-NS2B, NS2B-NS3, NS3-NS4A, NS4A-2K and NS4B-NS5. NS3 RNA helicase binds RNA and unwinds dsRNA in the 3' to 5' direction. Functionally, regulates the ATPase activity of the NS3 helicase activity. NS4A allows NS3 helicase to conserve energy during unwinding. In terms of biological role, functions as a signal peptide for NS4B and is required for the interferon antagonism activity of the latter. Induces the formation of ER-derived membrane vesicles where the viral replication takes place. Inhibits interferon (IFN)-induced host STAT1 phosphorylation and nuclear translocation, thereby preventing the establishment of cellular antiviral state by blocking the IFN-alpha/beta pathway. Inhibits STAT2 translocation in the nucleus after IFN-alpha treatment. Its function is as follows. Replicates the viral (+) and (-) RNA genome, and performs the capping of genomes in the cytoplasm. NS5 methylates viral RNA cap at guanine N-7 and ribose 2'-O positions. Besides its role in RNA genome replication, also prevents the establishment of cellular antiviral state by blocking the interferon-alpha/beta (IFN-alpha/beta) signaling pathway. Inhibits host TYK2 and STAT2 phosphorylation, thereby preventing activation of JAK-STAT signaling pathway. The chain is Genome polyprotein from Homo sapiens (Human).